We begin with the raw amino-acid sequence, 500 residues long: Na(+)/H(+) antiporter NhaB (500 aa).

Helical transmembrane passes span 11-31 (HGFL…FLVL), 34-54 (LLLA…EFIF), 58-78 (MALK…ALLL), 96-116 (VILL…LLLF), 121-141 (ILLG…LSAF), 145-165 (FLDA…FYAV), 205-225 (LLMH…VGEP), 241-261 (FLLK…LTCV), 311-331 (ILII…LMVI), 350-370 (FQDA…VAVI), 394-414 (MLYL…VATI), 450-470 (ATPN…APLI), and 477-497 (MVWM…WAVT).

The protein belongs to the NhaB Na(+)/H(+) (TC 2.A.34) antiporter family.

The protein localises to the cell inner membrane. It carries out the reaction 2 Na(+)(in) + 3 H(+)(out) = 2 Na(+)(out) + 3 H(+)(in). Its function is as follows. Na(+)/H(+) antiporter that extrudes sodium in exchange for external protons. This is Na(+)/H(+) antiporter NhaB from Pseudomonas putida (strain ATCC 700007 / DSM 6899 / JCM 31910 / BCRC 17059 / LMG 24140 / F1).